A 300-amino-acid polypeptide reads, in one-letter code: Probable lipid kinase YegS-like (300 aa).

In terms of domain architecture, DAGKc spans 1–129 (MSKKALLILH…CDVIRVNNHY (129 aa)). Residues threonine 38, 64-70 (GDGSVRD), and threonine 92 each bind ATP. Mg(2+) contacts are provided by leucine 210, aspartate 213, and leucine 215. Glutamate 272 functions as the Proton acceptor in the catalytic mechanism.

The protein belongs to the diacylglycerol/lipid kinase family. YegS lipid kinase subfamily. Mg(2+) is required as a cofactor. The cofactor is Ca(2+).

The protein localises to the cytoplasm. Its function is as follows. Probably phosphorylates lipids; the in vivo substrate is unknown. The protein is Probable lipid kinase YegS-like of Alcanivorax borkumensis (strain ATCC 700651 / DSM 11573 / NCIMB 13689 / SK2).